The chain runs to 205 residues: Holliday junction branch migration complex subunit RuvA (205 aa).

Residues 1-64 (MIGKLKGVID…EDMIRLYGFA (64 aa)) are domain I. Residues 65-143 (NQLEREWFRL…AFAGDASGTI (79 aa)) form a domain II region. The tract at residues 144-152 (GLKQELGAG) is flexible linker. Positions 153–205 (AAPAPVADAVSALSNLGYSRDQAANAVAAALKEAGENADSAKLIRLGLKELSR) are domain III.

Belongs to the RuvA family. As to quaternary structure, homotetramer. Forms an RuvA(8)-RuvB(12)-Holliday junction (HJ) complex. HJ DNA is sandwiched between 2 RuvA tetramers; dsDNA enters through RuvA and exits via RuvB. An RuvB hexamer assembles on each DNA strand where it exits the tetramer. Each RuvB hexamer is contacted by two RuvA subunits (via domain III) on 2 adjacent RuvB subunits; this complex drives branch migration. In the full resolvosome a probable DNA-RuvA(4)-RuvB(12)-RuvC(2) complex forms which resolves the HJ.

The protein resides in the cytoplasm. The RuvA-RuvB-RuvC complex processes Holliday junction (HJ) DNA during genetic recombination and DNA repair, while the RuvA-RuvB complex plays an important role in the rescue of blocked DNA replication forks via replication fork reversal (RFR). RuvA specifically binds to HJ cruciform DNA, conferring on it an open structure. The RuvB hexamer acts as an ATP-dependent pump, pulling dsDNA into and through the RuvAB complex. HJ branch migration allows RuvC to scan DNA until it finds its consensus sequence, where it cleaves and resolves the cruciform DNA. This chain is Holliday junction branch migration complex subunit RuvA, found in Brucella anthropi (strain ATCC 49188 / DSM 6882 / CCUG 24695 / JCM 21032 / LMG 3331 / NBRC 15819 / NCTC 12168 / Alc 37) (Ochrobactrum anthropi).